Consider the following 313-residue polypeptide: Methylenetetrahydrofolate dehydrogenase [NAD(+)] (313 aa).

The active site involves Cys152. Residues 187–188 (RS), 210–211 (DI), and 270–272 (FAG) contribute to the NAD(+) site.

Belongs to the tetrahydrofolate dehydrogenase/cyclohydrolase family. In terms of assembly, homodimer.

It catalyses the reaction (6R)-5,10-methylene-5,6,7,8-tetrahydrofolate + NAD(+) = (6R)-5,10-methenyltetrahydrofolate + NADH. Its pathway is one-carbon metabolism; tetrahydrofolate interconversion. Catalyzes oxidation of cytoplasmic one-carbon units for purine biosynthesis. This is Methylenetetrahydrofolate dehydrogenase [NAD(+)] (thfA) from Dictyostelium discoideum (Social amoeba).